The primary structure comprises 438 residues: Myosin light chain kinase, smooth muscle (438 aa).

The region spanning 1–241 (FRLVEKKTGK…CTQCLQHPWL (241 aa)) is the Protein kinase domain. Lys-15 provides a ligand contact to ATP. Tyr-97 is modified (phosphotyrosine; by ABL1). Asp-107 (proton acceptor) is an active-site residue. Tyr-157 carries the post-translational modification Phosphotyrosine; by ABL1. A calmodulin-binding region spans residues 233–296 (TQCLQHPWLX…SGLSGRKSST (64 aa)). Residues Ser-281, Ser-282, Ser-294, Ser-295, and Ser-298 each carry the phosphoserine modification. Residues 283–438 (MAMISGLSGR…GEGGEEEEEE (156 aa)) form a telokin region. The interval 289–309 (LSGRKSSTGSPTSPLNAEKLE) is disordered. The segment covering 292 to 303 (RKSSTGSPTSPL) has biased composition (polar residues). At Thr-300 the chain carries Phosphothreonine. Phosphoserine is present on Ser-301. Positions 331–420 (PYFSKTIRDL…GEATCTAELI (90 aa)) constitute an Ig-like C2-type domain. Residues Cys-352 and Cys-404 are joined by a disulfide bond.

The protein belongs to the protein kinase superfamily. CAMK Ser/Thr protein kinase family. As to quaternary structure, all isoforms including Telokin bind calmodulin. Interacts with SVIL. Interacts with CTTN; this interaction is reduced during thrombin-induced endothelial cell (EC) contraction but is promoted by the barrier-protective agonist sphingosine 1-phosphate (S1P) within lamellipodia. A complex made of ABL1, CTTN and MYLK regulates cortical actin-based cytoskeletal rearrangement critical to sphingosine 1-phosphate (S1P)-mediated endothelial cell (EC) barrier enhancement. Binds to NAA10/ARD1 and PTK2B/PYK2. Mg(2+) serves as cofactor. Ca(2+) is required as a cofactor. Post-translationally, the C-terminus is deglutamylated by AGTPBP1/CCP1, AGBL1/CCP4 and AGBL4/CCP6, leading to the formation of Myosin light chain kinase, smooth muscle, deglutamylated form. The consequences of C-terminal deglutamylation are unknown. Can probably be down-regulated by phosphorylation. Tyrosine phosphorylation by ABL1 increases kinase activity, reverses MLCK-mediated inhibition of Arp2/3-mediated actin polymerization, and enhances CTTN-binding. Phosphorylation by SRC promotes CTTN binding.

The protein localises to the cytoplasm. It is found in the cell projection. It localises to the lamellipodium. The protein resides in the cleavage furrow. Its subcellular location is the cytoskeleton. The protein localises to the stress fiber. The enzyme catalyses L-seryl-[myosin light chain] + ATP = O-phospho-L-seryl-[myosin light chain] + ADP + H(+). It catalyses the reaction L-threonyl-[myosin light chain] + ATP = O-phospho-L-threonyl-[myosin light chain] + ADP + H(+). Calcium/calmodulin-dependent myosin light chain kinase implicated in smooth muscle contraction via phosphorylation of myosin light chains (MLC). Also regulates actin-myosin interaction through a non-kinase activity. Phosphorylates PTK2B/PYK2 and myosin light-chains. Involved in the inflammatory response (e.g. apoptosis, vascular permeability, leukocyte diapedesis), cell motility and morphology, airway hyperreactivity and other activities relevant to asthma. Required for tonic airway smooth muscle contraction that is necessary for physiological and asthmatic airway resistance. Necessary for gastrointestinal motility. Implicated in the regulation of endothelial as well as vascular permeability, probably via the regulation of cytoskeletal rearrangements. In the nervous system it has been shown to control the growth initiation of astrocytic processes in culture and to participate in transmitter release at synapses formed between cultured sympathetic ganglion cells. Critical participant in signaling sequences that result in fibroblast apoptosis. Plays a role in the regulation of epithelial cell survival. Required for epithelial wound healing, especially during actomyosin ring contraction during purse-string wound closure. Mediates RhoA-dependent membrane blebbing. Triggers TRPC5 channel activity in a calcium-dependent signaling, by inducing its subcellular localization at the plasma membrane. Promotes cell migration (including tumor cells) and tumor metastasis. PTK2B/PYK2 activation by phosphorylation mediates ITGB2 activation and is thus essential to trigger neutrophil transmigration during acute lung injury (ALI). May regulate optic nerve head astrocyte migration. Probably involved in mitotic cytoskeletal regulation. Regulates tight junction probably by modulating ZO-1 exchange in the perijunctional actomyosin ring. Mediates burn-induced microvascular barrier injury; triggers endothelial contraction in the development of microvascular hyperpermeability by phosphorylating MLC. Essential for intestinal barrier dysfunction. Mediates Giardia spp.-mediated reduced epithelial barrier function during giardiasis intestinal infection via reorganization of cytoskeletal F-actin and tight junctional ZO-1. Necessary for hypotonicity-induced Ca(2+) entry and subsequent activation of volume-sensitive organic osmolyte/anion channels (VSOAC) in cervical cancer cells. The polypeptide is Myosin light chain kinase, smooth muscle (MYLK) (Ovis aries (Sheep)).